We begin with the raw amino-acid sequence, 71 residues long: Protein SlyX homolog (71 aa).

It belongs to the SlyX family.

This is Protein SlyX homolog from Rhodospirillum rubrum (strain ATCC 11170 / ATH 1.1.1 / DSM 467 / LMG 4362 / NCIMB 8255 / S1).